The following is a 79-amino-acid chain: Cyclin-dependent kinases regulatory subunit 2 (79 aa).

Lys-4 is subject to N6-acetyllysine.

The protein belongs to the CKS family. In terms of assembly, forms a homohexamer that can probably bind six kinase subunits.

In terms of biological role, binds to the catalytic subunit of the cyclin dependent kinases and is essential for their biological function. This is Cyclin-dependent kinases regulatory subunit 2 (CKS2) from Bos taurus (Bovine).